Reading from the N-terminus, the 89-residue chain is MQWVVMPLFSSNIFITVSSSSSSRFSRSSSVPFLSEFASACFSGIFCFGKSCFPTFLSFSDRNGDDVGGCVCGHWRHADSVINSMRLLR.

This is an uncharacterized protein from Archaeoglobus fulgidus (strain ATCC 49558 / DSM 4304 / JCM 9628 / NBRC 100126 / VC-16).